Consider the following 332-residue polypeptide: D-alanine--D-alanine ligase (332 aa).

The span at Met-1–Val-17 shows a compositional bias: polar residues. Residues Met-1–Thr-28 form a disordered region. Low complexity predominate over residues Ser-18–Thr-28. Residues Lys-132 to Ala-329 form the ATP-grasp domain. Val-158–Thr-213 contacts ATP. Residues Asp-283, Glu-296, and Asn-298 each coordinate Mg(2+).

This sequence belongs to the D-alanine--D-alanine ligase family. Requires Mg(2+) as cofactor. Mn(2+) is required as a cofactor.

The protein resides in the cytoplasm. It carries out the reaction 2 D-alanine + ATP = D-alanyl-D-alanine + ADP + phosphate + H(+). It functions in the pathway cell wall biogenesis; peptidoglycan biosynthesis. Functionally, cell wall formation. The chain is D-alanine--D-alanine ligase from Psychrobacter sp. (strain PRwf-1).